Reading from the N-terminus, the 491-residue chain is Glutamyl-tRNA(Gln) amidotransferase subunit A (491 aa).

Ser158 functions as the Charge relay system in the catalytic mechanism. Catalysis depends on Ser182, which acts as the Acyl-ester intermediate.

It belongs to the amidase family. GatA subfamily. As to quaternary structure, heterotrimer of A, B and C subunits.

The catalysed reaction is L-glutamyl-tRNA(Gln) + L-glutamine + ATP + H2O = L-glutaminyl-tRNA(Gln) + L-glutamate + ADP + phosphate + H(+). Allows the formation of correctly charged Gln-tRNA(Gln) through the transamidation of misacylated Glu-tRNA(Gln) in organisms which lack glutaminyl-tRNA synthetase. The reaction takes place in the presence of glutamine and ATP through an activated gamma-phospho-Glu-tRNA(Gln). The chain is Glutamyl-tRNA(Gln) amidotransferase subunit A from Bradyrhizobium diazoefficiens (strain JCM 10833 / BCRC 13528 / IAM 13628 / NBRC 14792 / USDA 110).